We begin with the raw amino-acid sequence, 330 residues long: Src kinase-associated phosphoprotein 2-B (330 aa).

The disordered stretch occupies residues 57-84; the sequence is DKAEDDDQEENDGFPLPPDAVSLASDRD. Residues 59–68 are compositionally biased toward acidic residues; it reads AEDDDQEEND. In terms of domain architecture, PH spans 105-208; that stretch reads EYLKAGYLEK…WINAIMNSRG (104 aa). The segment at 236–261 is disordered; sequence ELPEESEKPVTETETQKATPVPVNNT. Residues 240-250 are compositionally biased toward basic and acidic residues; sequence ESEKPVTETET. Residues 251–261 are compositionally biased toward polar residues; the sequence is QKATPVPVNNT. An SH3 domain is found at 268 to 329; sequence DYANFYRGLW…PKAYIIEMYD (62 aa).

Belongs to the SKAP family. In terms of processing, phosphorylated on tyrosines.

The protein localises to the cytoplasm. In terms of biological role, may be involved in B-cell and macrophage adhesion processes. May play a role in src signaling pathway. The protein is Src kinase-associated phosphoprotein 2-B (skap2-b) of Xenopus laevis (African clawed frog).